The following is a 283-amino-acid chain: Plasma membrane ascorbate-dependent reductase CYBRD1 (283 aa).

Over 1 to 5 the chain is Cytoplasmic; it reads MEGYK. The chain crosses the membrane as a helical span at residues 6–30; that stretch reads SFLAFLVSSLLLGFLGVIFTLVWVL. One can recognise a Cytochrome b561 domain in the interval 13–218; the sequence is SSLLLGFLGV…FGGLVVWMVT (206 aa). Residues 31 to 45 are Extracellular-facing; that stretch reads HWREGLGWDGGAAEF. A helical transmembrane segment spans residues 46 to 67; it reads NWHPVLVTSGFIFIQGIAIIVY. Heme b is bound by residues histidine 48, arginine 68, and lysine 77. Over 68 to 76 the chain is Cytoplasmic; the sequence is RLPWTWKCS. L-ascorbate is bound by residues lysine 77 and lysine 81. The chain crosses the membrane as a helical span at residues 77–103; that stretch reads KLLMKFIHAGLHLTALIFTIVALVAVF. Position 84 (histidine 84) interacts with heme b. Over 104–116 the chain is Extracellular; sequence DFHNAKNIPNMYS. Histidine 106 contributes to the Fe(3+) binding site. Residues 113–116 and histidine 118 contribute to the heme b site; that span reads NMYS. A helical transmembrane segment spans residues 117 to 142; it reads LHSWIGLTVVILYALQLVLGVSIYLL. At 143-149 the chain is on the cytoplasmic side; sequence PFASNTL. Arginine 150 is a binding site for L-ascorbate. The chain crosses the membrane as a helical span at residues 150 to 177; the sequence is RAALMPVHVYSGLFIFGTVIATALMGIT. Heme b contacts are provided by histidine 157 and glutamate 178. Residues 178–195 are Extracellular-facing; the sequence is EKLIFSLKEPPYSKLPPE. The helical transmembrane segment at 196-220 threads the bilayer; the sequence is AIFVNTFGLLILVFGGLVVWMVTTP. The Cytoplasmic portion of the chain corresponds to 221–283; that stretch reads AWKRPREQGM…LDEAGQRSTM (63 aa). Lysine 223 provides a ligand contact to heme b. A disordered region spans residues 234–262; sequence SPTVSSPDETEEGSTITDCSNTEKSDVEL. The span at 235 to 253 shows a compositional bias: polar residues; sequence PTVSSPDETEEGSTITDCS.

As to quaternary structure, homodimer. The cofactor is heme b.

It is found in the cell membrane. It localises to the apical cell membrane. The enzyme catalyses Fe(3+)(out) + L-ascorbate(in) = monodehydro-L-ascorbate radical(in) + Fe(2+)(out) + H(+). The catalysed reaction is Cu(2+)(out) + L-ascorbate(in) = Cu(+)(out) + monodehydro-L-ascorbate radical(in) + H(+). It catalyses the reaction monodehydro-L-ascorbate radical(out) + L-ascorbate(in) = monodehydro-L-ascorbate radical(in) + L-ascorbate(out). Its function is as follows. Plasma membrane reductase that uses cytoplasmic ascorbate as an electron donor to reduce extracellular Fe(3+) into Fe(2+). It is also able to reduce extracellular monodehydro-L-ascorbate and may be involved in extracellular ascorbate regeneration. May also function as a cupric transmembrane reductase. In Xenopus laevis (African clawed frog), this protein is Plasma membrane ascorbate-dependent reductase CYBRD1 (cybrd1).